We begin with the raw amino-acid sequence, 179 residues long: Warthog protein 3 (179 aa).

The N-terminal stretch at 1 to 19 (MLYHVEMFTIILLFGFSLA) is a signal peptide. N-linked (GlcNAc...) asparagine glycans are attached at residues Asn-52 and Asn-147.

Expressed in the trinucleate pharyngeal gland cell g1, seam cells and hypodermis.

Its subcellular location is the secreted. In terms of biological role, intercellular signal essential for a variety of patterning events during development. The protein is Warthog protein 3 (wrt-3) of Caenorhabditis elegans.